The sequence spans 338 residues: Mitochondrial transcription factor 1 (338 aa).

Residues leucine 23, aspartate 76, aspartate 100, and asparagine 136 each coordinate S-adenosyl-L-methionine.

It belongs to the class I-like SAM-binding methyltransferase superfamily. rRNA adenine N(6)-methyltransferase family.

It localises to the mitochondrion. Its function is as follows. Mitochondrial transcription factor that confers selective promoter recognition on the core subunit of the yeast mitochondrial RNA polymerase. Interacts with DNA in a non-specific manner. The polypeptide is Mitochondrial transcription factor 1 (MTF1) (Lachancea kluyveri (Yeast)).